Consider the following 599-residue polypeptide: Beta-(1--&gt;2)glucan export ATP-binding/permease protein NdvA (599 aa).

The ABC transmembrane type-1 domain maps to 21 to 301; sequence TITMCVASVL…ISAFINQTVT (281 aa). 5 consecutive transmembrane segments (helical) span residues 22 to 42, 55 to 75, 156 to 176, 248 to 268, and 276 to 296; these read ITMC…PVLF, IFSP…AAVF, MRMS…GQLV, MAST…VTKG, and IAFI…SAFI. One can recognise an ABC transporter domain in the interval 335 to 569; sequence IVFDNVTFEF…GGRFSDLLRA (235 aa). Residue 368–375 coordinates ATP; sequence GPTGAGKT.

It belongs to the ABC transporter superfamily. Beta-(1--&gt;2)glucan exporter (TC 3.A.1.108.1) family. As to quaternary structure, homodimer.

The protein resides in the cell inner membrane. It catalyses the reaction [(1-&gt;2)-beta-D-glucosyl](n)(in) + ATP + H2O = [(1-&gt;2)-beta-D-glucosyl](n)(out) + ADP + phosphate + H(+). In terms of biological role, involved in beta-(1--&gt;2)glucan export. Transmembrane domains (TMD) form a pore in the inner membrane and the ATP-binding domain (NBD) is responsible for energy generation. In Brucella suis biovar 1 (strain 1330), this protein is Beta-(1--&gt;2)glucan export ATP-binding/permease protein NdvA.